We begin with the raw amino-acid sequence, 311 residues long: Putative ribose-phosphate pyrophosphokinase 2 (311 aa).

ATP-binding positions include 38-40 (DGE) and 97-98 (RQ). His-131 and Asp-171 together coordinate Mg(2+). D-ribose 5-phosphate is bound at residue Asp-219.

Belongs to the ribose-phosphate pyrophosphokinase family. Class I subfamily. As to quaternary structure, homohexamer. The cofactor is Mg(2+).

Its subcellular location is the cytoplasm. The enzyme catalyses D-ribose 5-phosphate + ATP = 5-phospho-alpha-D-ribose 1-diphosphate + AMP + H(+). The protein operates within metabolic intermediate biosynthesis; 5-phospho-alpha-D-ribose 1-diphosphate biosynthesis; 5-phospho-alpha-D-ribose 1-diphosphate from D-ribose 5-phosphate (route I): step 1/1. In terms of biological role, involved in the biosynthesis of the central metabolite phospho-alpha-D-ribosyl-1-pyrophosphate (PRPP) via the transfer of pyrophosphoryl group from ATP to 1-hydroxyl of ribose-5-phosphate (Rib-5-P). This is Putative ribose-phosphate pyrophosphokinase 2 from Listeria monocytogenes serotype 4b (strain F2365).